The primary structure comprises 891 residues: DNA mismatch repair protein MutS (891 aa).

639–646 (GPNMAGKS) serves as a coordination point for ATP. Residues 827–854 (TIQEARPSAQGSEEKTPSSPAEKGLSLF) form a disordered region.

Belongs to the DNA mismatch repair MutS family.

Functionally, this protein is involved in the repair of mismatches in DNA. It is possible that it carries out the mismatch recognition step. This protein has a weak ATPase activity. In Treponema denticola (strain ATCC 35405 / DSM 14222 / CIP 103919 / JCM 8153 / KCTC 15104), this protein is DNA mismatch repair protein MutS.